A 414-amino-acid polypeptide reads, in one-letter code: V-set and immunoglobulin domain-containing protein 8 (414 aa).

The signal sequence occupies residues 1 to 21 (MRVGGAFHLLLVCLSPALLSA). 2 consecutive Ig-like V-type domains span residues 22–141 (VRIN…VIVT) and 146–257 (PAVP…VKVS). The Extracellular segment spans residues 22-263 (VRINGDGQEV…VKVSDSRRIG (242 aa)). Intrachain disulfides connect C44/C126 and C167/C239. A helical transmembrane segment spans residues 264–284 (VIIGIVLGSLLALGCLAVGIW). Over 285–414 (GLVCCCCGGS…PVQCKNGLLV (130 aa)) the chain is Cytoplasmic.

It localises to the membrane. The polypeptide is V-set and immunoglobulin domain-containing protein 8 (Homo sapiens (Human)).